A 400-amino-acid chain; its full sequence is Acetate kinase (400 aa).

Residue N10 coordinates Mg(2+). K17 contacts ATP. R91 is a binding site for substrate. The Proton donor/acceptor role is filled by D150. ATP is bound by residues 210–214, 285–287, and 333–337; these read HLGNG, DCR, and GIGEN. E387 is a Mg(2+) binding site.

The protein belongs to the acetokinase family. In terms of assembly, homodimer. The cofactor is Mg(2+). Requires Mn(2+) as cofactor.

It is found in the cytoplasm. It carries out the reaction acetate + ATP = acetyl phosphate + ADP. Its pathway is metabolic intermediate biosynthesis; acetyl-CoA biosynthesis; acetyl-CoA from acetate: step 1/2. In terms of biological role, catalyzes the formation of acetyl phosphate from acetate and ATP. Can also catalyze the reverse reaction. The chain is Acetate kinase from Yersinia pestis bv. Antiqua (strain Antiqua).